We begin with the raw amino-acid sequence, 93 residues long: Small ribosomal subunit protein uS17 (93 aa).

Belongs to the universal ribosomal protein uS17 family. As to quaternary structure, part of the 30S ribosomal subunit.

Functionally, one of the primary rRNA binding proteins, it binds specifically to the 5'-end of 16S ribosomal RNA. The protein is Small ribosomal subunit protein uS17 of Corynebacterium kroppenstedtii (strain DSM 44385 / JCM 11950 / CIP 105744 / CCUG 35717).